A 222-amino-acid chain; its full sequence is Ras-related protein Rab11C (222 aa).

Position 22 to 29 (22 to 29 (GDSAVGKT)) interacts with GTP. Positions 44 to 52 (SKATIGVEF) match the Effector region motif. Residues 70–74 (DTAGQ) and 128–131 (NKTD) contribute to the GTP site. 2 S-geranylgeranyl cysteine lipidation sites follow: C219 and C220.

It belongs to the small GTPase superfamily. Rab family.

The protein localises to the cell membrane. This chain is Ras-related protein Rab11C (RAB11C), found in Nicotiana tabacum (Common tobacco).